A 397-amino-acid polypeptide reads, in one-letter code: MSLALYTCLFWLCTSGLWTTQAVTDEDSSSHRDLAPTNVDFAFNLYKRLVALNSDKNTLISPVSISMALAMLSLSTRGSTQYLENLGFNMSKMSEAEIHQGFQYLNSLLQQSDTGLEMNMGNVMFLLQNLKLKDSFLADTKHYYESEALTIPSKDWTKAGEQINNHVKNKTQGKIEHVVSDLDSSATLILINYIFLKGIWKLPFSPENTREEDFYVNETSTVKVPMMVQSGNISYFRDSAIPCQMVQMNYVGNGTTFIILPDQGQMDTVVAALNRDTIDRWGKLMIPRQMNLYIPKFSMSDTYDLQDVLADVGIKDLFTNQSDFADTTKDTPLTLTVLHKAMLQLDEGNVLPAATNGPPVHLPSESFTLKYNRPFIFLAFDKYTWSSLMMSQVMNPA.

A signal peptide spans 1 to 22 (MSLALYTCLFWLCTSGLWTTQA). N-linked (GlcNAc...) asparagine glycans are attached at residues asparagine 89, asparagine 169, asparagine 217, and asparagine 232. Glutamine 247 is a binding site for cortisol. Residue asparagine 253 is glycosylated (N-linked (GlcNAc...) asparagine). Aspartate 279 is a binding site for cortisol. A glycan (N-linked (GlcNAc...) asparagine) is linked at asparagine 320. Tryptophan 385 lines the cortisol pocket.

Belongs to the serpin family. In terms of tissue distribution, expressed by the liver; secreted in plasma.

It localises to the secreted. Major transport protein for glucocorticoids and progestins in the blood of almost all vertebrate species. In Mus musculus (Mouse), this protein is Corticosteroid-binding globulin (Serpina6).